The sequence spans 286 residues: 4-hydroxybenzoate octaprenyltransferase (286 aa).

The next 7 helical transmembrane spans lie at 21 to 40 (GTLL…AGGM), 96 to 116 (LFVI…GLVV), 142 to 162 (FLGV…TGEV), 167 to 187 (WWLF…YAMV), 210 to 230 (QIIG…GWSA), 235 to 255 (LYGL…MLIF), and 266 to 286 (FLNN…DYLF).

This sequence belongs to the UbiA prenyltransferase family. Mg(2+) is required as a cofactor.

It localises to the cell inner membrane. The catalysed reaction is all-trans-octaprenyl diphosphate + 4-hydroxybenzoate = 4-hydroxy-3-(all-trans-octaprenyl)benzoate + diphosphate. Its pathway is cofactor biosynthesis; ubiquinone biosynthesis. Catalyzes the prenylation of para-hydroxybenzoate (PHB) with an all-trans polyprenyl group. Mediates the second step in the final reaction sequence of ubiquinone-8 (UQ-8) biosynthesis, which is the condensation of the polyisoprenoid side chain with PHB, generating the first membrane-bound Q intermediate 3-octaprenyl-4-hydroxybenzoate. This chain is 4-hydroxybenzoate octaprenyltransferase, found in Shewanella sp. (strain MR-4).